Reading from the N-terminus, the 228-residue chain is ATP-dependent dethiobiotin synthetase BioD 1 (228 aa).

13–18 (EVGKTV) contacts ATP. Threonine 17 contacts Mg(2+). Residue lysine 38 is part of the active site. Serine 42 is a substrate binding site. ATP is bound by residues aspartate 55, 116-119 (EGAG), 176-177 (ND), and 205-207 (PWL). Mg(2+) contacts are provided by aspartate 55 and glutamate 116.

This sequence belongs to the dethiobiotin synthetase family. Homodimer. Requires Mg(2+) as cofactor.

The protein resides in the cytoplasm. The catalysed reaction is (7R,8S)-7,8-diammoniononanoate + CO2 + ATP = (4R,5S)-dethiobiotin + ADP + phosphate + 3 H(+). The protein operates within cofactor biosynthesis; biotin biosynthesis; biotin from 7,8-diaminononanoate: step 1/2. In terms of biological role, catalyzes a mechanistically unusual reaction, the ATP-dependent insertion of CO2 between the N7 and N8 nitrogen atoms of 7,8-diaminopelargonic acid (DAPA, also called 7,8-diammoniononanoate) to form a ureido ring. This chain is ATP-dependent dethiobiotin synthetase BioD 1, found in Salmonella typhi.